The primary structure comprises 289 residues: ATP synthase gamma chain (289 aa).

Belongs to the ATPase gamma chain family. As to quaternary structure, F-type ATPases have 2 components, CF(1) - the catalytic core - and CF(0) - the membrane proton channel. CF(1) has five subunits: alpha(3), beta(3), gamma(1), delta(1), epsilon(1). CF(0) has three main subunits: a, b and c.

It is found in the cell inner membrane. Produces ATP from ADP in the presence of a proton gradient across the membrane. The gamma chain is believed to be important in regulating ATPase activity and the flow of protons through the CF(0) complex. This Polynucleobacter asymbioticus (strain DSM 18221 / CIP 109841 / QLW-P1DMWA-1) (Polynucleobacter necessarius subsp. asymbioticus) protein is ATP synthase gamma chain.